A 151-amino-acid polypeptide reads, in one-letter code: Salivary C-type lectin 2 (151 aa).

Residues 1 to 15 (MKLLLSFALLGLVAC) form the signal peptide. In terms of domain architecture, C-type lectin spans 25 to 147 (YCFPNEVATW…CTSKRRFVCE (123 aa)). Intrachain disulfides connect Cys-41–Cys-146 and Cys-118–Cys-138.

Ca(2+) is required as a cofactor. In terms of tissue distribution, expressed in female salivary gland. Not detected or low-level expression in female midgut and fat body.

The protein localises to the secreted. Salivary protein with carbohydrate-binding activity. Binds to D-mannose, D-galactose, D-glucose and maltose. Agglutinates host erythrocytes. Probably participates in mosquito innate immune responses to prevent microorganism multiplication in sugar and blood meals. Functionally, (Microbial infection) Binds to the surface of and agglutinates Escherichia coli in vitro. Its function is as follows. (Microbial infection) Binds to the surface of and agglutinates Pseudomonas aeruginosa in vitro. In terms of biological role, (Microbial infection) Binds to the surface of and agglutinates Bacillus subtilis in vitro. (Microbial infection) Agglutinates Staphylococcus aureus in vitro. Functionally, (Microbial infection) Agglutinates Candida albicans in vitro. Its function is as follows. (Microbial infection) Does not affect replication of dengue virus type 2 in host cells. The sequence is that of Salivary C-type lectin 2 from Aedes albopictus (Asian tiger mosquito).